An 898-amino-acid chain; its full sequence is Alanine--tRNA ligase (898 aa).

His-582, His-586, Cys-685, and His-689 together coordinate Zn(2+).

This sequence belongs to the class-II aminoacyl-tRNA synthetase family. The cofactor is Zn(2+).

It is found in the cytoplasm. It carries out the reaction tRNA(Ala) + L-alanine + ATP = L-alanyl-tRNA(Ala) + AMP + diphosphate. In terms of biological role, catalyzes the attachment of alanine to tRNA(Ala) in a two-step reaction: alanine is first activated by ATP to form Ala-AMP and then transferred to the acceptor end of tRNA(Ala). Also edits incorrectly charged Ser-tRNA(Ala) and Gly-tRNA(Ala) via its editing domain. This Mycolicibacterium vanbaalenii (strain DSM 7251 / JCM 13017 / BCRC 16820 / KCTC 9966 / NRRL B-24157 / PYR-1) (Mycobacterium vanbaalenii) protein is Alanine--tRNA ligase.